The chain runs to 207 residues: LexA repressor (207 aa).

Residues 28–48 constitute a DNA-binding region (H-T-H motif); it reads RAEIARELGFRSANAAEEHLK. Active-site for autocatalytic cleavage activity residues include serine 124 and lysine 161.

Belongs to the peptidase S24 family. As to quaternary structure, homodimer.

The enzyme catalyses Hydrolysis of Ala-|-Gly bond in repressor LexA.. Functionally, represses a number of genes involved in the response to DNA damage (SOS response), including recA and lexA. In the presence of single-stranded DNA, RecA interacts with LexA causing an autocatalytic cleavage which disrupts the DNA-binding part of LexA, leading to derepression of the SOS regulon and eventually DNA repair. This Vibrio vulnificus (strain CMCP6) protein is LexA repressor.